We begin with the raw amino-acid sequence, 76 residues long: Large ribosomal subunit protein bL31 (76 aa).

Residues cysteine 16, cysteine 18, cysteine 38, and cysteine 41 each contribute to the Zn(2+) site.

Belongs to the bacterial ribosomal protein bL31 family. Type A subfamily. As to quaternary structure, part of the 50S ribosomal subunit. It depends on Zn(2+) as a cofactor.

In terms of biological role, binds the 23S rRNA. This Nocardia farcinica (strain IFM 10152) protein is Large ribosomal subunit protein bL31.